The sequence spans 235 residues: Ubiquinone/menaquinone biosynthesis C-methyltransferase UbiE (235 aa).

Positions 60, 81, and 126 each coordinate S-adenosyl-L-methionine.

It belongs to the class I-like SAM-binding methyltransferase superfamily. MenG/UbiE family.

It carries out the reaction a 2-demethylmenaquinol + S-adenosyl-L-methionine = a menaquinol + S-adenosyl-L-homocysteine + H(+). It catalyses the reaction a 2-methoxy-6-(all-trans-polyprenyl)benzene-1,4-diol + S-adenosyl-L-methionine = a 5-methoxy-2-methyl-3-(all-trans-polyprenyl)benzene-1,4-diol + S-adenosyl-L-homocysteine + H(+). Its pathway is quinol/quinone metabolism; menaquinone biosynthesis; menaquinol from 1,4-dihydroxy-2-naphthoate: step 2/2. It participates in cofactor biosynthesis; ubiquinone biosynthesis. In terms of biological role, methyltransferase required for the conversion of demethylmenaquinol (DMKH2) to menaquinol (MKH2) and the conversion of 2-polyprenyl-6-methoxy-1,4-benzoquinol (DDMQH2) to 2-polyprenyl-3-methyl-6-methoxy-1,4-benzoquinol (DMQH2). This is Ubiquinone/menaquinone biosynthesis C-methyltransferase UbiE from Citrifermentans bemidjiense (strain ATCC BAA-1014 / DSM 16622 / JCM 12645 / Bem) (Geobacter bemidjiensis).